A 1568-amino-acid chain; its full sequence is Kielin/chordin-like protein (1568 aa).

Positions 1–23 are cleaved as a signal peptide; sequence MAGVGAAALSLLLHLGALALAAG. Positions 27–49 are disordered; the sequence is GAVPREPPGQQTTAHSSVLAGNS. A compositionally biased stretch (polar residues) spans 35–49; it reads GQQTTAHSSVLAGNS. Positions 60 to 87 form a coiled coil; that stretch reads LGRLEAAVMELREQNKDLQTRVRQLESC. VWFC domains follow at residues 136–193, 194–253, 253–312, 312–370, 426–485, 485–544, 544–602, 602–661, 667–725, 725–782, 782–841, 900–959, 959–1017, 1017–1085, 1082–1145, and 1149–1209; these read RGCS…PICR, PGCD…PTCQ, QGCT…PVCD, DGCF…PVCD, PACE…PSCD, DSCT…PRCP, PDCI…NDCS, SGCA…PQCP, AGCP…PSCD, DGCL…PDCD, DGCE…PTCQ, HSCL…PRCR, RGCL…PQCS, SDCE…PTCA, PTCA…PVCR, and QSCV…PRCL. The N-linked (GlcNAc...) asparagine glycan is linked to asparagine 340. The N-linked (GlcNAc...) asparagine glycan is linked to asparagine 499. N-linked (GlcNAc...) asparagine glycosylation occurs at asparagine 1090. Residues 1213 to 1389 enclose the VWFD domain; it reads ASCMAFGDPH…EGLWPGRPCS (177 aa). 2 cysteine pairs are disulfide-bonded: cysteine 1215–cysteine 1347 and cysteine 1237–cysteine 1388. One can recognise a TIL domain in the interval 1483 to 1543; it reads CPLERGFVFD…EAHCIPPEAC (61 aa).

Interacts with BMP7 and, by doing so, enhances binding to the type I receptors that contains cytoplasmic serine/threonine protein kinase domains. Also able to interact with activin-A and TGFB1.

Its subcellular location is the secreted. Its function is as follows. Enhances bone morphogenetic protein (BMP) signaling in a paracrine manner. In contrast, it inhibits both the activin-A and TGFB1-mediated signaling pathways. The chain is Kielin/chordin-like protein from Homo sapiens (Human).